We begin with the raw amino-acid sequence, 1250 residues long: DNA-directed RNA polymerase subunit beta (1250 aa).

The segment at G1139 to L1226 is disordered. 2 stretches are compositionally biased toward acidic residues: residues E1155–E1183 and A1207–L1226.

The protein belongs to the RNA polymerase beta chain family. In terms of assembly, the RNAP catalytic core consists of 2 alpha, 1 beta, 1 beta' and 1 omega subunit. When a sigma factor is associated with the core the holoenzyme is formed, which can initiate transcription.

It carries out the reaction RNA(n) + a ribonucleoside 5'-triphosphate = RNA(n+1) + diphosphate. DNA-dependent RNA polymerase catalyzes the transcription of DNA into RNA using the four ribonucleoside triphosphates as substrates. This Symbiobacterium thermophilum (strain DSM 24528 / JCM 14929 / IAM 14863 / T) protein is DNA-directed RNA polymerase subunit beta.